Reading from the N-terminus, the 330-residue chain is Neurogenic differentiation factor 4 (330 aa).

The disordered stretch occupies residues Met1–Lys79. The span at Leu25 to Asn35 shows a compositional bias: basic and acidic residues. Acidic residues predominate over residues Asp52–Gly64. Residues Pro67–Lys79 are compositionally biased toward basic residues. The Nuclear localization signal signature appears at Lys73 to Lys79. One can recognise a bHLH domain in the interval Ala87–Leu139. The tract at residues Leu162–Leu183 is leucine-zipper.

Efficient DNA binding requires dimerization with another bHLH protein. Post-translationally, serine or threonine phosphorylation within the basic region may regulate neurogenic activity. As to expression, expressed in both the developing central nervous system and peripheral nervous system.

The protein localises to the nucleus. Its function is as follows. Probably acts as a transcriptional activator. Mediates neuronal differentiation. Required for the regulation of amacrine cell fate specification in the retina. The polypeptide is Neurogenic differentiation factor 4 (NEUROD4) (Gallus gallus (Chicken)).